A 253-amino-acid chain; its full sequence is Chloride intracellular channel protein 4 (253 aa).

The residue at position 2 (Ala2) is an N-acetylalanine. A required for insertion into the membrane region spans residues 2 to 101 (ALSMPLNGLK…EEFLEEVLCP (100 aa)). Ser4 is modified (phosphoserine). Lys24 carries the post-translational modification N6-acetyllysine. The short motif at 35–38 (CPFS) is the G-site element. Residues 37-57 (FSQRLFMILWLKGVVFSVTTV) form a helical membrane-spanning segment. One can recognise a GST C-terminal domain in the interval 81–244 (NSEVKTDVNK…PSDKEVEIAY (164 aa)). Residue Lys130 is modified to N6-acetyllysine. 3 positions are modified to phosphoserine: Ser132, Ser167, and Ser236. Tyr244 bears the Phosphotyrosine mark.

Belongs to the chloride channel CLIC family. As to quaternary structure, monomer. Interacts with HRH3. Detected in brain, in cell bodies and dendrites of Purkinje cells in cerebellar neurons (at protein level). Expressed neonatal and adult cardiomyocytes (at protein level). Marked expression was found in hippocampus and cerebellum, and in many other tissues.

The protein localises to the cytoplasm. The protein resides in the cytoskeleton. It is found in the microtubule organizing center. Its subcellular location is the centrosome. It localises to the cytoplasmic vesicle membrane. The protein localises to the nucleus. The protein resides in the cell membrane. It is found in the mitochondrion. Its subcellular location is the cell junction. It localises to the endoplasmic reticulum membrane. The catalysed reaction is chloride(in) = chloride(out). It catalyses the reaction thiocyanate(in) = thiocyanate(out). The enzyme catalyses nitrate(in) = nitrate(out). It carries out the reaction iodide(out) = iodide(in). The catalysed reaction is bromide(in) = bromide(out). It catalyses the reaction fluoride(in) = fluoride(out). The enzyme catalyses choline(out) = choline(in). Channel activity is redox- and pH-regulated. Anion vs cation selectivity is enhanced when fully oxidized. Functionally, in the soluble state, catalyzes glutaredoxin-like thiol disulfide exchange reactions with reduced glutathione as electron donor. Can insert into membranes and form voltage-dependent multi-ion conductive channels. Membrane insertion seems to be redox-regulated and may occur only under oxidizing conditions. Has alternate cellular functions like a potential role in angiogenesis or in maintaining apical-basolateral membrane polarity during mitosis and cytokinesis. Could also promote endothelial cell proliferation and regulate endothelial morphogenesis (tubulogenesis). Promotes cell-surface expression of HRH3. This Rattus norvegicus (Rat) protein is Chloride intracellular channel protein 4 (Clic4).